A 418-amino-acid chain; its full sequence is Glutamate dehydrogenase (418 aa).

K105 is an active-site residue. An NAD(+)-binding site is contributed by 217 to 223 (GYGNVGY).

It belongs to the Glu/Leu/Phe/Val dehydrogenases family. As to quaternary structure, homohexamer.

It is found in the cytoplasm. The catalysed reaction is L-glutamate + NAD(+) + H2O = 2-oxoglutarate + NH4(+) + NADH + H(+). The enzyme catalyses L-glutamate + NADP(+) + H2O = 2-oxoglutarate + NH4(+) + NADPH + H(+). This chain is Glutamate dehydrogenase (gdhA), found in Aeropyrum pernix (strain ATCC 700893 / DSM 11879 / JCM 9820 / NBRC 100138 / K1).